The sequence spans 386 residues: Zinc finger protein 385A (386 aa).

Residues 74-98 (ISCNVCQIRFNSQSQAEAHYKGNRH) form a Matrin-type 1 zinc finger. The segment at 88–193 (QAEAHYKGNR…ASLPGGSKEE (106 aa)) is disordered. Positions 103–121 (KGIEAAKTRGREPSVRESG) are enriched in basic and acidic residues. The necessary for binding to ITPR1, CEBPA and p53/TP53 mRNAs stretch occupies residues 145–351 (NGLGPAPGSP…AGSPLSLRPA (207 aa)). Ser185 is subject to Phosphoserine. The segment at 201 to 225 (LYCALCKVAVNSLSQLEAHNKGTKH) adopts a Matrin-type 2 zinc-finger fold. Phosphothreonine is present on Thr248. The Matrin-type 3 zinc-finger motif lies at 261–285 (FHCEICNVKVNSEVQLKQHISSRRH). Residues 279–305 (HISSRRHRDGVAGKPNPLLSRHKKPRG) form a disordered region.

As to quaternary structure, interacts with p53/TP53; the interaction is direct and enhances p53/TP53 transactivation functions on cell-cycle arrest target genes, resulting in growth arrest. Interacts with ELAVL1; the interaction is indirect, mRNA-dependent and may regulate p53/TP53 expression. In terms of processing, ubiquitinated upon prolonged exposure to genotoxic stress, which leads to proteasomal degradation of ZNF385A and releases p53/TP53 from cell-cycle arrest target gene promoters. Expressed in brain and testis (at protein level). In brain, the expression is located to olfactory bulb, cerebral cortex, hippocampus, satellite cells and Purkinje cells of the cerebellum molecular layer. Detected in bone marrow, white and brown adipose tissue, lung and at lower levels in the thymus.

The protein resides in the cytoplasm. It is found in the nucleus. Its subcellular location is the nucleolus. It localises to the cell projection. The protein localises to the dendrite. Its function is as follows. RNA-binding protein that affects the localization and the translation of a subset of mRNA. May play a role in adipogenesis through binding to the 3'-UTR of CEBPA mRNA and regulation of its translation. Targets ITPR1 mRNA to dendrites in Purkinje cells, and may regulate its activity-dependent translation. With ELAVL1, binds the 3'-UTR of p53/TP53 mRNAs to control their nuclear export induced by CDKN2A. Hence, may regulate p53/TP53 expression and mediate in part the CDKN2A anti-proliferative activity. May also bind CCNB1 mRNA. Alternatively, may also regulate p53/TP53 activity through direct protein-protein interaction. Interacts with p53/TP53 and promotes cell-cycle arrest over apoptosis enhancing preferentially the DNA binding and transactivation of p53/TP53 on cell-cycle arrest target genes over proapoptotic target genes. May also regulate the ubiquitination and stability of CDKN1A promoting DNA damage-induced cell cycle arrest. Also plays a role in megakaryocytes differentiation. The polypeptide is Zinc finger protein 385A (Znf385a) (Mus musculus (Mouse)).